A 90-amino-acid polypeptide reads, in one-letter code: Probable Fe(2+)-trafficking protein (90 aa).

This sequence belongs to the Fe(2+)-trafficking protein family.

Functionally, could be a mediator in iron transactions between iron acquisition and iron-requiring processes, such as synthesis and/or repair of Fe-S clusters in biosynthetic enzymes. This Pseudomonas putida (strain ATCC 700007 / DSM 6899 / JCM 31910 / BCRC 17059 / LMG 24140 / F1) protein is Probable Fe(2+)-trafficking protein.